The following is a 310-amino-acid chain: Glutaminase 1 (310 aa).

Positions 66, 117, 161, 168, 192, 244, and 262 each coordinate substrate. An N6-acetyllysine modification is found at Lys-294.

This sequence belongs to the glutaminase family. In terms of assembly, homotetramer.

The enzyme catalyses L-glutamine + H2O = L-glutamate + NH4(+). The polypeptide is Glutaminase 1 (Escherichia coli O157:H7).